Reading from the N-terminus, the 930-residue chain is Isoleucine--tRNA ligase (930 aa).

The 'HIGH' region signature appears at 57–67 (PYANGNIHVGH). Glu-554 is a binding site for L-isoleucyl-5'-AMP. Residues 595-599 (KMSKS) carry the 'KMSKS' region motif. Lys-598 serves as a coordination point for ATP. The Zn(2+) site is built by Cys-888, Cys-891, Cys-908, and Cys-911.

This sequence belongs to the class-I aminoacyl-tRNA synthetase family. IleS type 1 subfamily. In terms of assembly, monomer. Zn(2+) serves as cofactor.

Its subcellular location is the cytoplasm. The enzyme catalyses tRNA(Ile) + L-isoleucine + ATP = L-isoleucyl-tRNA(Ile) + AMP + diphosphate. Its function is as follows. Catalyzes the attachment of isoleucine to tRNA(Ile). As IleRS can inadvertently accommodate and process structurally similar amino acids such as valine, to avoid such errors it has two additional distinct tRNA(Ile)-dependent editing activities. One activity is designated as 'pretransfer' editing and involves the hydrolysis of activated Val-AMP. The other activity is designated 'posttransfer' editing and involves deacylation of mischarged Val-tRNA(Ile). The polypeptide is Isoleucine--tRNA ligase (Streptococcus pneumoniae (strain P1031)).